A 203-amino-acid polypeptide reads, in one-letter code: MLTEQQRRELDWEKTDGLMPVIVQHAVSGEVLMLGYMNPEALDKTLESGKVTFFSRTKQRLWTKGETSGNFLNVVSIAPDCDNDTLLVLANPIGPTCHKGTSSCFGDTAHQWLFLYQLEQLLAERKSADPETSYTAKLYASGTKRIAQKVGEEGVETALAATVHDRFELTNEASDLMYHLLVLLQDQGLDLTTVIENLRKRHQ.

Residues 1 to 114 form a phosphoribosyl-AMP cyclohydrolase region; that stretch reads MLTEQQRREL…FGDTAHQWLF (114 aa). The phosphoribosyl-ATP pyrophosphohydrolase stretch occupies residues 115–203; the sequence is LYQLEQLLAE…VIENLRKRHQ (89 aa).

In the N-terminal section; belongs to the PRA-CH family. This sequence in the C-terminal section; belongs to the PRA-PH family.

It localises to the cytoplasm. It carries out the reaction 1-(5-phospho-beta-D-ribosyl)-ATP + H2O = 1-(5-phospho-beta-D-ribosyl)-5'-AMP + diphosphate + H(+). The enzyme catalyses 1-(5-phospho-beta-D-ribosyl)-5'-AMP + H2O = 1-(5-phospho-beta-D-ribosyl)-5-[(5-phospho-beta-D-ribosylamino)methylideneamino]imidazole-4-carboxamide. It participates in amino-acid biosynthesis; L-histidine biosynthesis; L-histidine from 5-phospho-alpha-D-ribose 1-diphosphate: step 2/9. Its pathway is amino-acid biosynthesis; L-histidine biosynthesis; L-histidine from 5-phospho-alpha-D-ribose 1-diphosphate: step 3/9. This chain is Histidine biosynthesis bifunctional protein HisIE (hisI), found in Escherichia coli (strain K12).